The following is a 332-amino-acid chain: MPSMPEEPLLTPTPDRFCMFPIHYPQIWEMYKKAEASFWTAEEVDLSQDNRDWENSLNDGERHFIKHVLAFFAASDGIVLENLASRFMSDVQVSEARAFYGFQIAIENIHSEMYSLLLDTYIKDNKERDHLFRAIETIPCVAKKAQWAMKWIDGSQTFAERIIAFACVEGIFFSGSFCSIFWLKKRGLMPGLTFSNELISRDEGLHCDFACLLYTLLKTKLSEERVKSIVCDAVEIEREFVCDALPCALVGMNRDLMSQYIEFVADRLLGALGYGKVYGVTNPFDWMELISLQGKTNFFEKRVGDYQKASVMSSVNGNGAFDNHVFSLDEDF.

Fe cation contacts are provided by D76, E107, and H110. Residue Y114 is part of the active site. Fe cation-binding residues include E169, E203, and H206.

Belongs to the ribonucleoside diphosphate reductase small chain family. Homodimer and heterodimer with RNR2A. Heterotetramer of two R1 and two R2 chains. Interacts with CSN7 (via C-terminal tail). Requires Fe cation as cofactor. As to expression, expressed in roots, cauline and rosette leaves, stems and flowers.

The protein resides in the cytoplasm. Its subcellular location is the nucleus. The catalysed reaction is a 2'-deoxyribonucleoside 5'-diphosphate + [thioredoxin]-disulfide + H2O = a ribonucleoside 5'-diphosphate + [thioredoxin]-dithiol. Its function is as follows. Provides the precursors necessary for DNA synthesis. Catalyzes the biosynthesis of deoxyribonucleotides from the corresponding ribonucleotides. Involved in DNA damage repair and programmed cell death inhibition. The sequence is that of Ribonucleoside-diphosphate reductase small chain C (TSO2) from Arabidopsis thaliana (Mouse-ear cress).